The primary structure comprises 678 residues: Platelet endothelial cell adhesion molecule (678 aa).

The N-terminal stretch at M1–A17 is a signal peptide. Residues Q18–K589 are Extracellular-facing. 6 consecutive Ig-like C2-type domains span residues G40–T126, G135–S213, P225–N309, P315–V391, G413–S472, and P488–P577. Residues C47 and C99 are joined by a disulfide bond. 2 N-linked (GlcNAc...) asparagine glycosylation sites follow: N74 and N141. Disulfide bonds link C142–C195 and C245–C293. N-linked (GlcNAc...) asparagine glycosylation is found at N309, N345, N360, N424, and N540. Disulfide bonds link C336-C375, C420-C465, and C512-C561. A helical transmembrane segment spans residues G590–Y610. Topologically, residues Y611 to P678 are cytoplasmic. Residues N634 to S653 form a disordered region. An ITIM motif motif is present at residues V658–V663. The residue at position 660 (Y660) is a Phosphotyrosine; by FER.

Trans-homodimer (via Ig-like C2-type 1 and Ig-like C2-type 2 domains); trans-homodimerization is required for cell-cell interaction. Forms a complex with BDKRB2 and GNAQ. Interacts with BDKRB2 and GNAQ. Interacts with PTPN11. Interacts with FER. Interacts with CD177; the interaction is Ca(2+)-dependent; the interaction is direct. In terms of processing, phosphorylated on Ser and Tyr residues after cellular activation. In endothelial cells Fyn mediates mechanical-force (stretch or pull) induced tyrosine phosphorylation. Phosphorylated on tyrosine residues by FER and FES in response to FCER1 activation. Palmitoylation by ZDHHC21 is necessary for cell surface expression in endothelial cells and enrichment in membrane rafts.

The protein localises to the cell membrane. It localises to the membrane raft. The protein resides in the cell junction. In terms of biological role, cell adhesion molecule which is required for leukocyte transendothelial migration (TEM) under most inflammatory conditions. Tyr-660 plays a critical role in TEM and is required for efficient trafficking of PECAM1 to and from the lateral border recycling compartment (LBRC) and is also essential for the LBRC membrane to be targeted around migrating leukocytes. Trans-homophilic interaction may play a role in endothelial cell-cell adhesion via cell junctions. Heterophilic interaction with CD177 plays a role in transendothelial migration of neutrophils. Homophilic ligation of PECAM1 prevents macrophage-mediated phagocytosis of neighboring viable leukocytes by transmitting a detachment signal. Promotes macrophage-mediated phagocytosis of apoptotic leukocytes by tethering them to the phagocytic cells; PECAM1-mediated detachment signal appears to be disabled in apoptotic leukocytes. Modulates bradykinin receptor BDKRB2 activation. Regulates bradykinin- and hyperosmotic shock-induced ERK1/2 activation in endothelial cells. Induces susceptibility to atherosclerosis. In Rattus norvegicus (Rat), this protein is Platelet endothelial cell adhesion molecule (Pecam1).